Here is a 114-residue protein sequence, read N- to C-terminus: Small ribosomal subunit protein uS17 (114 aa).

Belongs to the universal ribosomal protein uS17 family. As to quaternary structure, part of the 30S ribosomal subunit.

In terms of biological role, one of the primary rRNA binding proteins, it binds specifically to the 5'-end of 16S ribosomal RNA. In Sulfolobus acidocaldarius (strain ATCC 33909 / DSM 639 / JCM 8929 / NBRC 15157 / NCIMB 11770), this protein is Small ribosomal subunit protein uS17.